A 203-amino-acid chain; its full sequence is NAD(P)H-quinone oxidoreductase subunit M, chloroplastic (203 aa).

The N-terminal 21 residues, 1-21 (MAASSSYMACAKFSMLGWLGG), are a transit peptide targeting the chloroplast. The span at 34–48 (SPQEQAEVQESQEVN) shows a compositional bias: low complexity. The interval 34-61 (SPQEQAEVQESQEVNAQEEEKVKQPVQP) is disordered.

It belongs to the NDH complex subunit M family. In terms of assembly, part of the chloroplast NDH complex, composed of a mixture of chloroplast and nucleus encoded subunits. Component of the NDH subcomplex A, at least composed of ndhH, ndhI, ndhJ, ndhK, ndhL, ndhM, ndhN and ndhO.

The protein resides in the plastid. It localises to the chloroplast thylakoid membrane. The enzyme catalyses a plastoquinone + NADH + (n+1) H(+)(in) = a plastoquinol + NAD(+) + n H(+)(out). It carries out the reaction a plastoquinone + NADPH + (n+1) H(+)(in) = a plastoquinol + NADP(+) + n H(+)(out). Its function is as follows. NDH shuttles electrons from NAD(P)H:plastoquinone, via FMN and iron-sulfur (Fe-S) centers, to quinones in the photosynthetic chain and possibly in a chloroplast respiratory chain. The immediate electron acceptor for the enzyme in this species is believed to be plastoquinone. Couples the redox reaction to proton translocation, and thus conserves the redox energy in a proton gradient. The chain is NAD(P)H-quinone oxidoreductase subunit M, chloroplastic from Populus jackii (Balm of Gilead).